Here is a 175-residue protein sequence, read N- to C-terminus: Cytochrome c-550-like protein (175 aa).

A signal peptide spans 1-34 (MYQPHFWQRSIGWLCGGLLILLLGWTIAPATALA). C81, C84, H85, and C135 together coordinate heme c.

It belongs to the cytochrome c family. PsbV subfamily. Requires heme c as cofactor.

The protein resides in the cellular thylakoid membrane. Its function is as follows. Probable low-potential cytochrome c, can partially replace cytochrome c-550 (PsbV) function. The chain is Cytochrome c-550-like protein from Thermosynechococcus vestitus (strain NIES-2133 / IAM M-273 / BP-1).